Consider the following 259-residue polypeptide: NAD kinase (259 aa).

The active-site Proton acceptor is the Asp-43. Residues 43-44 (DG), 111-112 (NE), and Arg-136 each bind NAD(+).

Belongs to the NAD kinase family. It depends on a divalent metal cation as a cofactor.

It localises to the cytoplasm. It carries out the reaction NAD(+) + ATP = ADP + NADP(+) + H(+). Involved in the regulation of the intracellular balance of NAD and NADP, and is a key enzyme in the biosynthesis of NADP. Catalyzes specifically the phosphorylation on 2'-hydroxyl of the adenosine moiety of NAD to yield NADP. This chain is NAD kinase, found in Mycoplasma pneumoniae (strain ATCC 29342 / M129 / Subtype 1) (Mycoplasmoides pneumoniae).